The primary structure comprises 452 residues: UDP-glycosyltransferase 76D1 (452 aa).

UDP-alpha-D-glucose contacts are provided by residues Ser269, Ala329–Gln331, His346–Glu354, and Ser368–Gln371.

It belongs to the UDP-glycosyltransferase family.

In terms of biological role, possesses low quercetin 7-O-glucosyltransferase activity in vitro. The polypeptide is UDP-glycosyltransferase 76D1 (UGT76D1) (Arabidopsis thaliana (Mouse-ear cress)).